Consider the following 143-residue polypeptide: MAKKIDGYIKLQVPAGKANPSPPIGPALGQKGVNIMAFCKEFNAATSNQEPGLPIPTEITVYSDKSFTFIMKSPPAAYLLRKAAGIAKGSGTPNTAKVGKVDRAQLEDIVKTKDADLTAADLDAAVRTIAGTARSMGITVEGV.

Belongs to the universal ribosomal protein uL11 family. In terms of assembly, part of the ribosomal stalk of the 50S ribosomal subunit. Interacts with L10 and the large rRNA to form the base of the stalk. L10 forms an elongated spine to which L12 dimers bind in a sequential fashion forming a multimeric L10(L12)X complex. In terms of processing, one or more lysine residues are methylated.

Functionally, forms part of the ribosomal stalk which helps the ribosome interact with GTP-bound translation factors. This Psychrobacter cryohalolentis (strain ATCC BAA-1226 / DSM 17306 / VKM B-2378 / K5) protein is Large ribosomal subunit protein uL11.